The chain runs to 422 residues: Cytochrome P450-pinF1, plant-inducible (422 aa).

Position 369 (Cys369) interacts with heme.

It belongs to the cytochrome P450 family. Heme serves as cofactor.

Functionally, not essential for virulence, but may be involved in the detoxification of plant protective agents at the site of wounding. This chain is Cytochrome P450-pinF1, plant-inducible (cyp103), found in Rhizobium radiobacter (Agrobacterium tumefaciens).